Reading from the N-terminus, the 485-residue chain is GlcNAc-binding protein A (485 aa).

The signal sequence occupies residues 1 to 23; it reads MKKQPKMTAIALILSGISGLAYG. Residues 24–201 form the Chitin-binding type-4 domain; that stretch reads HGYVSAVENG…SFYNVIDVKF (178 aa). The region spanning 437-478 is the Chitin-binding type-3 domain; that stretch reads AGTKVLASDGAIYQCKPWPYSGYCQQWTSNATQYQPGTGSHW.

It belongs to the GbpA family.

It localises to the secreted. Probably interacts with GlcNAc residues. May promote attachment to both epithelial cell surfaces and chitin. In Vibrio cholerae serotype O1 (strain ATCC 39541 / Classical Ogawa 395 / O395), this protein is GlcNAc-binding protein A.